Here is a 585-residue protein sequence, read N- to C-terminus: Isocitrate dehydrogenase kinase/phosphatase (585 aa).

Residues 315 to 321 (APGVKGM) and lysine 336 each bind ATP. Residue aspartate 371 is part of the active site.

This sequence belongs to the AceK family.

The protein resides in the cytoplasm. The catalysed reaction is L-seryl-[isocitrate dehydrogenase] + ATP = O-phospho-L-seryl-[isocitrate dehydrogenase] + ADP + H(+). Bifunctional enzyme which can phosphorylate or dephosphorylate isocitrate dehydrogenase (IDH) on a specific serine residue. This is a regulatory mechanism which enables bacteria to bypass the Krebs cycle via the glyoxylate shunt in response to the source of carbon. When bacteria are grown on glucose, IDH is fully active and unphosphorylated, but when grown on acetate or ethanol, the activity of IDH declines drastically concomitant with its phosphorylation. This Photorhabdus laumondii subsp. laumondii (strain DSM 15139 / CIP 105565 / TT01) (Photorhabdus luminescens subsp. laumondii) protein is Isocitrate dehydrogenase kinase/phosphatase.